A 609-amino-acid chain; its full sequence is Tyrosyl-DNA phosphodiesterase 1 (609 aa).

The span at methionine 1 to isoleucine 12 shows a compositional bias: polar residues. The tract at residues methionine 1 to isoleucine 155 is disordered. Position 61 is a phosphoserine (serine 61). Residues glutamine 105–serine 118 show a composition bias toward basic and acidic residues. Residues serine 119 and serine 132 each carry the phosphoserine modification. Threonine 148 is modified (phosphothreonine). Serine 149 is modified (phosphoserine). The Nucleophile role is filled by histidine 264. Position 266 (lysine 266) interacts with substrate. An interaction with DNA region spans residues serine 401 to serine 404. The Proton donor/acceptor role is filled by histidine 494. Lysine 496 contacts substrate.

This sequence belongs to the tyrosyl-DNA phosphodiesterase family. As to quaternary structure, monomer. Ubiquitous.

The protein localises to the nucleus. It localises to the cytoplasm. In terms of biological role, DNA repair enzyme that can remove a variety of covalent adducts from DNA through hydrolysis of a 3'-phosphodiester bond, giving rise to DNA with a free 3' phosphate. Catalyzes the hydrolysis of dead-end complexes between DNA and the topoisomerase I active site tyrosine residue. Hydrolyzes 3'-phosphoglycolates on protruding 3' ends on DNA double-strand breaks due to DNA damage by radiation and free radicals. Acts on blunt-ended double-strand DNA breaks and on single-stranded DNA. Has low 3'exonuclease activity and can remove a single nucleoside from the 3'end of DNA and RNA molecules with 3'hydroxyl groups. Has no exonuclease activity towards DNA or RNA with a 3'phosphate. This Mus musculus (Mouse) protein is Tyrosyl-DNA phosphodiesterase 1 (Tdp1).